The chain runs to 2427 residues: Interferon-induced very large GTPase 1 (2427 aa).

Residues 1485 to 1726 (DKRLFVLSVL…KISDFKFRVQ (242 aa)) enclose the VLIG-type G domain. Residues 1495-1502 (GLQSSGKS), 1548-1551 (DTEG), and 1625-1628 (TAKD) contribute to the GTP site.

The protein belongs to the TRAFAC class dynamin-like GTPase superfamily. Very large inducible GTPase (VLIG) family. In terms of tissue distribution, widely expressed. Expressed at low basal level in lung, heart, thymus and spleen; at still lower level in liver, ovary, kidney and brain. Expressed at very weak level in testis. Undetectable in embryo.

It is found in the cytoplasm. It localises to the cytosol. The protein localises to the nucleus. The protein is Interferon-induced very large GTPase 1 (Gvin1) of Mus musculus (Mouse).